We begin with the raw amino-acid sequence, 408 residues long: CinA-like protein (408 aa).

Belongs to the CinA family.

In Thermotoga maritima (strain ATCC 43589 / DSM 3109 / JCM 10099 / NBRC 100826 / MSB8), this protein is CinA-like protein.